We begin with the raw amino-acid sequence, 351 residues long: Ca(2+)/H(+) antiporter ChaA (351 aa).

A run of 11 helical transmembrane segments spans residues 4-24 (IFFI…LMHW), 25-45 (PSAV…SYMG), 59-79 (IGGL…SLFA), 86-106 (GIVL…VAGL), 130-150 (GLLI…SVGM), 156-176 (LNLS…ALYF), 205-225 (VATI…ENLV), 241-261 (FIGV…SAII), 282-302 (IAMF…TSMP), 303-323 (LVFT…MIAI), and 331-351 (WFEG…FFLL).

Belongs to the Ca(2+):cation antiporter (CaCA) (TC 2.A.19) family. Cation/proton exchanger (CAX) subfamily. Homotrimer.

It localises to the cell membrane. Its activity is regulated as follows. Calcium efflux is tightly regulated by intracellular pH. Ca(+)/H(+) antiporter that extrudes calcium in exchange for external protons. Does not transport sodium or potassium. This Bacillus subtilis (strain 168) protein is Ca(2+)/H(+) antiporter ChaA (chaA).